A 236-amino-acid chain; its full sequence is tRNA1(Val) (adenine(37)-N6)-methyltransferase (236 aa).

This sequence belongs to the methyltransferase superfamily. tRNA (adenine-N(6)-)-methyltransferase family.

The protein localises to the cytoplasm. The catalysed reaction is adenosine(37) in tRNA1(Val) + S-adenosyl-L-methionine = N(6)-methyladenosine(37) in tRNA1(Val) + S-adenosyl-L-homocysteine + H(+). Specifically methylates the adenine in position 37 of tRNA(1)(Val) (anticodon cmo5UAC). The polypeptide is tRNA1(Val) (adenine(37)-N6)-methyltransferase (Actinobacillus pleuropneumoniae serotype 5b (strain L20)).